A 946-amino-acid chain; its full sequence is Calcium-transporting ATPase type 2C member 2 (946 aa).

Topologically, residues 1 to 106 (MVEGRVSEFL…DNSEPVWKKY (106 aa)) are cytoplasmic. Residues 71-95 (VDLHTGLSEFSVTQRRLAHGWNEFV) form an interaction with ORAI1 region. Residues 107-127 (LDQFKNPLILLLLGSALVSVL) traverse the membrane as a helical segment. Residues 128–129 (TK) are Extracellular-facing. The helical transmembrane segment at 130–150 (EYEDAVSIATAVLVVVTVAFI) threads the bilayer. Residues 151–231 (QEYRSEKSLE…EAEPCSKTDS (81 aa)) lie on the Cytoplasmic side of the membrane. The helical transmembrane segment at 232–252 (PLTGGGDLTTLSNIVFMGTLV) threads the bilayer. The Extracellular segment spans residues 253–293 (QYGRGQGVVIGTGESSQFGEVFKMMQAEETPKTPLQKSMDR). Thr-264 is subject to Phosphothreonine. 2 positions are modified to phosphoserine: Ser-267 and Ser-268. The helical transmembrane segment at 294–314 (LGKQLTLFSFGIIGLIMLIGW) threads the bilayer. The Cytoplasmic portion of the chain corresponds to 315–331 (SQGKQLLSMFTIGVSLA). Ca(2+) is bound by residues Val-332, Ala-333, Ile-335, and Glu-337. The helical transmembrane segment at 332–352 (VAAIPEGLPIVVMVTLVLGVL) threads the bilayer. At 353–750 (RMAKKRVIVK…ISALSLITLS (398 aa)) the chain is on the extracellular side. The active-site 4-aspartylphosphate intermediate is Asp-379. Mg(2+)-binding residues include Asp-674 and Asp-678. A helical transmembrane segment spans residues 751-771 (TVFNLPSPLNAMQILWINIIM). The Ca(2+) site is built by Asn-768 and Asp-772. The Cytoplasmic portion of the chain corresponds to 772–804 (DGPPAQSLGVEPVDKDAFRQPPRSVRDTILSRA). A helical membrane pass occupies residues 805-825 (LILKILMSAAIIISGTLFIFW). Residues 826 to 837 (KEMPEDRASTPR) are Extracellular-facing. A helical membrane pass occupies residues 838–855 (TTTMTFTCFVFFDLFNAL). Residues 856 to 874 (TCRSQTKLIFEIGFLRNHM) are Cytoplasmic-facing. A helical transmembrane segment spans residues 875–895 (FLYSVLGSILGQLAVIYIPPL). Residues 896–905 (QRVFQTENLG) are Extracellular-facing. Residues 906–926 (ALDLLFLTGLASSVFILSELL) traverse the membrane as a helical segment. Topologically, residues 927-946 (KLCEKYCCSPKRVQMHPEDV) are cytoplasmic.

It belongs to the cation transport ATPase (P-type) (TC 3.A.3) family. Type IIA subfamily. In terms of assembly, interacts (via N-terminus) with ORAI1 (via N- and C-termini); this interaction regulates Ca(2+) influx at the plasma membrane. As to expression, highly expressed in the gastrointestinal and respiratory tracts, prostate, thyroid, salivary, and mammary glands. Expressed in colon epithelial cells (at protein level). Expressed in brain and testis (at protein level).

The protein resides in the golgi apparatus. Its subcellular location is the trans-Golgi network membrane. The protein localises to the cell membrane. It localises to the basolateral cell membrane. It carries out the reaction Ca(2+)(in) + ATP + H2O = Ca(2+)(out) + ADP + phosphate + H(+). It catalyses the reaction Mn(2+)(in) + ATP + H2O = Mn(2+)(out) + ADP + phosphate + H(+). In terms of biological role, ATP-driven pump that supplies the Golgi apparatus with Ca(2+) and Mn(2+) ions, both essential cofactors for processing and trafficking of newly synthesized proteins in the secretory pathway. Within a catalytic cycle, acquires Ca(2+) or Mn(2+) ions on the cytoplasmic side of the membrane and delivers them to the lumenal side. The transfer of ions across the membrane is coupled to ATP hydrolysis and is associated with a transient phosphorylation that shifts the pump conformation from inward-facing to outward-facing state. Induces Ca(2+) influx independently of its ATP-driven pump function. At the basolateral membrane of mammary epithelial cells, interacts with Ca(2+) channel ORAI1 and mediates Ca(2+) entry independently of the Ca(2+) content of endoplasmic reticulum or Golgi stores. May facilitate transepithelial transport of large quantities of Ca(2+) for milk secretion via activation of Ca(2+) influx channels at the plasma membrane and active Ca(2+) transport at the Golgi apparatus. This Homo sapiens (Human) protein is Calcium-transporting ATPase type 2C member 2.